The following is a 338-amino-acid chain: MDAISDPTFKHARSRKQVTEESPSLLTVIIEIAPKLWTTFDEEGNEKGSIIKVLEALIVFLNAHLAFNSANKVAVIAAYSQGIKYLYPESTSALKASESENKTRSDLKIINSDMYRRFRNVDETLVEEIYKLFELEKKQIEQNSQRSTLAGAMSAGLTYVNRISKESVTTSLKSRLLVLTCGSGSSKDEIFQYIPIMNCIFSATKMKCPIDVVKIGGSKESTFLQQTTDATNGVYLHVESTEGLIQYLATAMFIDPSLRPIIVKPNHGSVDFRTSCYLTGRVVAVGFICSVCLCVLSIIPPGNKCPACDSQFDEHVIAKLKRKPVVPRLKAKKKVTKP.

Residue Met1 is modified to N-acetylmethionine. The C4-type zinc finger occupies 289–308 (CSVCLCVLSIIPPGNKCPAC).

It belongs to the TFB4 family. As to quaternary structure, component of the 7-subunit TFIIH core complex composed of XPB/SSL2, XPD/RAD3, SSL1, TFB1, TFB2, TFB4 and TFB5, which is active in NER. The core complex associates with the 3-subunit CTD-kinase module TFIIK composed of CCL1, KIN28 and TFB3 to form the 10-subunit holoenzyme (holo-TFIIH) active in transcription. An additionnal subunit, TFB6, plays a role in the dissociation of the SSL2 helicase from TFIIH after transcription initiation.

Its subcellular location is the nucleus. Its function is as follows. Component of the general transcription and DNA repair factor IIH (TFIIH) core complex, which is involved in general and transcription-coupled nucleotide excision repair (NER) of damaged DNA and, when complexed to TFIIK, in RNA transcription by RNA polymerase II. In NER, TFIIH acts by opening DNA around the lesion to allow the excision of the damaged oligonucleotide and its replacement by a new DNA fragment. In transcription, TFIIH has an essential role in transcription initiation. When the pre-initiation complex (PIC) has been established, TFIIH is required for promoter opening and promoter escape. Phosphorylation of the C-terminal tail (CTD) of the largest subunit of RNA polymerase II by the kinase module TFIIK controls the initiation of transcription. This Saccharomyces cerevisiae (strain ATCC 204508 / S288c) (Baker's yeast) protein is General transcription and DNA repair factor IIH subunit TFB4 (TFB4).